We begin with the raw amino-acid sequence, 126 residues long: Large ribosomal subunit protein bL19 (126 aa).

This sequence belongs to the bacterial ribosomal protein bL19 family.

Functionally, this protein is located at the 30S-50S ribosomal subunit interface and may play a role in the structure and function of the aminoacyl-tRNA binding site. The sequence is that of Large ribosomal subunit protein bL19 from Gluconacetobacter diazotrophicus (strain ATCC 49037 / DSM 5601 / CCUG 37298 / CIP 103539 / LMG 7603 / PAl5).